The sequence spans 670 residues: DNA ligase (670 aa).

Residues 32–36 (DSEYD), 81–82 (SL), and glutamate 114 contribute to the NAD(+) site. Catalysis depends on lysine 116, which acts as the N6-AMP-lysine intermediate. NAD(+) is bound by residues arginine 137, glutamate 174, lysine 291, and lysine 315. Zn(2+) contacts are provided by cysteine 409, cysteine 412, cysteine 427, and cysteine 433. Residues 592 to 670 (ASENLFKDKT…EEEFLAQITR (79 aa)) form the BRCT domain.

The protein belongs to the NAD-dependent DNA ligase family. LigA subfamily. Mg(2+) is required as a cofactor. The cofactor is Mn(2+).

The enzyme catalyses NAD(+) + (deoxyribonucleotide)n-3'-hydroxyl + 5'-phospho-(deoxyribonucleotide)m = (deoxyribonucleotide)n+m + AMP + beta-nicotinamide D-nucleotide.. Functionally, DNA ligase that catalyzes the formation of phosphodiester linkages between 5'-phosphoryl and 3'-hydroxyl groups in double-stranded DNA using NAD as a coenzyme and as the energy source for the reaction. It is essential for DNA replication and repair of damaged DNA. The polypeptide is DNA ligase (Haemophilus influenzae (strain PittGG)).